The chain runs to 221 residues: Serine/arginine-rich splicing factor 2 (221 aa).

Positions 14–92 (TSLKVDNLTY…RELRVQMARY (79 aa)) constitute an RRM domain. The segment at 91 to 221 (RYGRPPDSHH…SPEEEGAVSS (131 aa)) is disordered. Basic residues-rich tracts occupy residues 117–171 (RRSR…RSKS) and 179–189 (SRSRSRSRSRS).

The protein belongs to the splicing factor SR family. In terms of processing, extensively phosphorylated on serine residues in the RS domain.

Its subcellular location is the nucleus. Necessary for the splicing of pre-mRNA. It is required for formation of the earliest ATP-dependent splicing complex and interacts with spliceosomal components bound to both the 5'- and 3'-splice sites during spliceosome assembly. It also is required for ATP-dependent interactions of both U1 and U2 snRNPs with pre-mRNA. The polypeptide is Serine/arginine-rich splicing factor 2 (SRSF2) (Gallus gallus (Chicken)).